The sequence spans 116 residues: MRHRCRVPQLGKPADQRKALLRALTTELIRHGQIKTTKARAKAVRSEVDRMITLAKDGSLAARRRALGYMYDKPTVHALFADAPSRYKDRDGGYTRIIRTLRRRGDNAEMAVIELV.

It belongs to the bacterial ribosomal protein bL17 family. As to quaternary structure, part of the 50S ribosomal subunit. Contacts protein L32.

The polypeptide is Large ribosomal subunit protein bL17 (Synechocystis sp. (strain ATCC 27184 / PCC 6803 / Kazusa)).